The sequence spans 188 residues: Large ribosomal subunit protein bL35m (188 aa).

This sequence belongs to the bacterial ribosomal protein bL35 family.

It is found in the mitochondrion. The protein is Large ribosomal subunit protein bL35m (MRPL35) of Bos taurus (Bovine).